Reading from the N-terminus, the 218-residue chain is Large ribosomal subunit protein uL3 (218 aa).

Residues 121-163 are disordered; sequence GYQKRHGFSRGPMTHGSKNHREPGSIGPGTTPGRIYPGKRMAG.

Belongs to the universal ribosomal protein uL3 family. Part of the 50S ribosomal subunit. Forms a cluster with proteins L14 and L19.

One of the primary rRNA binding proteins, it binds directly near the 3'-end of the 23S rRNA, where it nucleates assembly of the 50S subunit. The polypeptide is Large ribosomal subunit protein uL3 (Parasynechococcus marenigrum (strain WH8102)).